The primary structure comprises 69 residues: Large ribosomal subunit protein bL28 (69 aa).

It belongs to the bacterial ribosomal protein bL28 family.

This Aquifex aeolicus (strain VF5) protein is Large ribosomal subunit protein bL28.